The primary structure comprises 403 residues: Phosphoglycerate kinase (403 aa).

Residues 21-23 (DFN), Arg-36, 59-62 (HLGR), Arg-119, and Arg-154 each bind substrate. Residues Lys-207, Gly-299, Glu-330, and 357 to 360 (GGDA) contribute to the ATP site.

This sequence belongs to the phosphoglycerate kinase family. In terms of assembly, monomer.

Its subcellular location is the cytoplasm. The enzyme catalyses (2R)-3-phosphoglycerate + ATP = (2R)-3-phospho-glyceroyl phosphate + ADP. Its pathway is carbohydrate degradation; glycolysis; pyruvate from D-glyceraldehyde 3-phosphate: step 2/5. This Chlamydia felis (strain Fe/C-56) (Chlamydophila felis) protein is Phosphoglycerate kinase.